We begin with the raw amino-acid sequence, 845 residues long: Lon protease (845 aa).

A Lon N-terminal domain is found at 45–242 (MPILALRNMI…RLLYLLHKEL (198 aa)). 393–400 (GPPGVGKT) contributes to the ATP binding site. Residues 629-811 (NGDAGVVIGL…NEVLKEALLE (183 aa)) form the Lon proteolytic domain. Catalysis depends on residues Ser717 and Lys760.

The protein belongs to the peptidase S16 family. In terms of assembly, homohexamer. Organized in a ring with a central cavity.

The protein resides in the cytoplasm. It carries out the reaction Hydrolysis of proteins in presence of ATP.. Its function is as follows. ATP-dependent serine protease that mediates the selective degradation of mutant and abnormal proteins as well as certain short-lived regulatory proteins. Required for cellular homeostasis and for survival from DNA damage and developmental changes induced by stress. Degrades polypeptides processively to yield small peptide fragments that are 5 to 10 amino acids long. Binds to DNA in a double-stranded, site-specific manner. The protein is Lon protease of Porphyromonas gingivalis (strain ATCC 33277 / DSM 20709 / CIP 103683 / JCM 12257 / NCTC 11834 / 2561).